Here is a 667-residue protein sequence, read N- to C-terminus: UvrABC system protein B (667 aa).

A Helicase ATP-binding domain is found at 25-180; sequence DSLQNQHRFQ…LLRALVSVQY (156 aa). Residue 38–45 participates in ATP binding; sequence GATGTGKT. A Beta-hairpin motif is present at residues 91-114; sequence YYDYYQPEAYIPVSDTYIEKSSSI. The Helicase C-terminal domain occupies 429–595; that stretch reads QVDDLLGEIK…PIVKRSSNSI (167 aa). The 36-residue stretch at 626–661 folds into the UVR domain; that stretch reads PELIQQLEAQMKEAAKNLEFESAAKYRDRIKQLRDK.

Belongs to the UvrB family. In terms of assembly, forms a heterotetramer with UvrA during the search for lesions. Interacts with UvrC in an incision complex.

The protein resides in the cytoplasm. Functionally, the UvrABC repair system catalyzes the recognition and processing of DNA lesions. A damage recognition complex composed of 2 UvrA and 2 UvrB subunits scans DNA for abnormalities. Upon binding of the UvrA(2)B(2) complex to a putative damaged site, the DNA wraps around one UvrB monomer. DNA wrap is dependent on ATP binding by UvrB and probably causes local melting of the DNA helix, facilitating insertion of UvrB beta-hairpin between the DNA strands. Then UvrB probes one DNA strand for the presence of a lesion. If a lesion is found the UvrA subunits dissociate and the UvrB-DNA preincision complex is formed. This complex is subsequently bound by UvrC and the second UvrB is released. If no lesion is found, the DNA wraps around the other UvrB subunit that will check the other stand for damage. This Microcystis aeruginosa (strain NIES-843 / IAM M-2473) protein is UvrABC system protein B.